A 963-amino-acid polypeptide reads, in one-letter code: Ubiquitin carboxyl-terminal hydrolase 4 (963 aa).

One can recognise a DUSP domain in the interval 11-122; sequence PDAETQKSEL…GQQPIVRKVV (112 aa). The necessary for interaction with SART3 stretch occupies residues 27–216; the sequence is TLQRGAQWYL…LYLGQVLVIE (190 aa). A Nuclear export signal motif is present at residues 133 to 141; the sequence is VEVYLLELK. In terms of domain architecture, Ubiquitin-like 1 spans 142–226; the sequence is LCENSDPTNV…PQNEDGTWPR (85 aa). Residues 220–255 are disordered; that stretch reads EDGTWPRQTLQSKSSTAPSRNFTTSPKSSASPYSSV. The segment covering 225–243 has biased composition (polar residues); that stretch reads PRQTLQSKSSTAPSRNFTT. The tract at residues 229-295 is required for USP4 activation by providing conformational flexibility between the DUSP and catalytic domains; the sequence is LQSKSSTAPS…SYNCQEPPSS (67 aa). Positions 244-255 are enriched in low complexity; that stretch reads SPKSSASPYSSV. The USP domain occupies 302-923; it reads CGLGNLGNTC…AAYVLFYQRR (622 aa). The active-site Nucleophile is the C311. A regulates ubiquitin dissociation region spans residues 384–386; sequence PQF. The necessary for interaction with RBL2 stretch occupies residues 405-407; the sequence is LHE. S445 carries the post-translational modification Phosphoserine. Residues 459–463 form a necessary for interaction with RB1 and RBL2 region; the sequence is LVCPE. Positions 461 and 464 each coordinate Zn(2+). The Ubiquitin-like 2 domain occupies 483–571; that stretch reads LKKDRVMEVF…IFVYEVCSTS (89 aa). Residues 485–775 form an interacts with DUSP and ubiquitin-like 1 domains and is required for USP4 activation region; the sequence is KDRVMEVFLV…LQPQKKKKTT (291 aa). The interval 637-698 is disordered; the sequence is DEFGSSPLEP…PSETTQKKIK (62 aa). S655 carries the post-translational modification Phosphoserine. A compositionally biased stretch (acidic residues) spans 657–666; sequence EGEDEEEMEH. Phosphoserine occurs at positions 675 and 680. The short motif at 767–772 is the Nuclear localization signal element; that stretch reads QPQKKK. The Zn(2+) site is built by C799 and C802. H881 serves as the catalytic Proton acceptor. A disordered region spans residues 928–963; that stretch reads YKTPSLSSSGSSDGGTRPSSSQQGLGDDEACSMDTN. A compositionally biased stretch (low complexity) spans 932 to 948; sequence SLSSSGSSDGGTRPSSS. A compositionally biased stretch (acidic residues) spans 953–963; sequence GDDEACSMDTN.

The protein belongs to the peptidase C19 family. USP4 subfamily. In terms of assembly, interacts with RB1 (both dephosphorylated and hypophosphorylated forms). Interacts with RBL1 and RBL2. Interacts with ADORA2A (via cytoplasmic C-terminus); the interaction is direct. Interacts with SART3; recruits USP4 to its substrate PRPF3. Phosphorylated at Ser-445 by PKB/AKT1 in response to EGF stimulus, promoting its ability deubiquitinate RHEB. In terms of processing, monoubiquitinated by TRIM21. Ubiquitination does not lead to its proteasomal degradation. Autodeubiquitinated.

It is found in the cytoplasm. The protein resides in the nucleus. The enzyme catalyses Thiol-dependent hydrolysis of ester, thioester, amide, peptide and isopeptide bonds formed by the C-terminal Gly of ubiquitin (a 76-residue protein attached to proteins as an intracellular targeting signal).. Its activity is regulated as follows. The completion of the deubiquitinase reaction is mediated by the DUSP and ubiquitin-like 1 domains which promotes the release of ubiquitin from the catalytic site enabling subsequent reactions to occur. Deubiquitinating enzyme that removes conjugated ubiquitin from target proteins. Deubiquitinates PDPK1. Deubiquitinates TRIM21. Deubiquitinates receptor ADORA2A which increases the amount of functional receptor at the cell surface. Deubiquitinates HAS2. Deubiquitinates RHEB in response to EGF signaling, promoting mTORC1 signaling. May regulate mRNA splicing through deubiquitination of the U4 spliceosomal protein PRPF3. This may prevent its recognition by the U5 component PRPF8 thereby destabilizing interactions within the U4/U6.U5 snRNP. May also play a role in the regulation of quality control in the ER. The protein is Ubiquitin carboxyl-terminal hydrolase 4 (USP4) of Pongo abelii (Sumatran orangutan).